The chain runs to 167 residues: Leptin (167 aa).

An N-terminal signal peptide occupies residues 1 to 21 (MRCGPLCRFLWLWPYLSCVEA). Cysteines 117 and 167 form a disulfide.

Belongs to the leptin family.

It is found in the secreted. In terms of biological role, key player in the regulation of energy balance and body weight control. Once released into the circulation, has central and peripheral effects by binding LEPR, found in many tissues, which results in the activation of several major signaling pathways. In the hypothalamus, acts as an appetite-regulating factor that induces a decrease in food intake and an increase in energy consumption by inducing anorexinogenic factors and suppressing orexigenic neuropeptides, also regulates bone mass and secretion of hypothalamo-pituitary-adrenal hormones. In the periphery, increases basal metabolism, influences reproductive function, regulates pancreatic beta-cell function and insulin secretion, is pro-angiogenic for endothelial cell and affects innate and adaptive immunity. In the arcuate nucleus of the hypothalamus, activates by depolarization POMC neurons inducing FOS and SOCS3 expression to release anorexigenic peptides and inhibits by hyperpolarization NPY neurons inducing SOCS3 with a consequent reduction on release of orexigenic peptides. In addition to its known satiety inducing effect, has a modulatory role in nutrient absorption. In the intestine, reduces glucose absorption by enterocytes by activating PKC and leading to a sequential activation of p38, PI3K and ERK signaling pathways which exerts an inhibitory effect on glucose absorption. Acts as a growth factor on certain tissues, through the activation of different signaling pathways increases expression of genes involved in cell cycle regulation such as CCND1, via JAK2-STAT3 pathway, or VEGFA, via MAPK1/3 and PI3K-AKT1 pathways. May also play an apoptotic role via JAK2-STAT3 pathway and up-regulation of BIRC5 expression. Pro-angiogenic, has mitogenic activity on vascular endothelial cells and plays a role in matrix remodeling by regulating the expression of matrix metalloproteinases (MMPs) and tissue inhibitors of metalloproteinases (TIMPs). In innate immunity, modulates the activity and function of neutrophils by increasing chemotaxis and the secretion of oxygen radicals. Increases phagocytosis by macrophages and enhances secretion of pro-inflammatory mediators. Increases cytotoxic ability of NK cells. Plays a pro-inflammatory role, in synergy with IL1B, by inducing NOS2 which promotes the production of IL6, IL8 and Prostaglandin E2, through a signaling pathway that involves JAK2, PI3K, MAP2K1/MEK1 and MAPK14/p38. In adaptive immunity, promotes the switch of memory T-cells towards T helper-1 cell immune responses. Increases CD4(+)CD25(-) T-cell proliferation and reduces autophagy during TCR (T-cell receptor) stimulation, through MTOR signaling pathway activation and BCL2 up-regulation. The chain is Leptin (LEP) from Canis lupus familiaris (Dog).